We begin with the raw amino-acid sequence, 479 residues long: Poly(A) polymerase catalytic subunit (479 aa).

Catalysis depends on residues Asp202 and Asp204. Residues Asp202, Asp204, and Asp253 each contribute to the Ca(2+) site.

Belongs to the poxviridae poly(A) polymerase catalytic subunit family. In terms of assembly, heterodimer of a large (catalytic) subunit and a small (regulatory) subunit.

The enzyme catalyses RNA(n) + ATP = RNA(n)-3'-adenine ribonucleotide + diphosphate. Its function is as follows. Polymerase that creates the 3'-poly(A) tail of mRNA's. The chain is Poly(A) polymerase catalytic subunit (OPG063) from Mus musculus (Mouse).